Reading from the N-terminus, the 325-residue chain is Putative 1-aminocyclopropane-1-carboxylate deaminase (325 aa).

Lys54 bears the N6-(pyridoxal phosphate)lysine mark.

Belongs to the ACC deaminase/D-cysteine desulfhydrase family. The cofactor is pyridoxal 5'-phosphate.

It catalyses the reaction 1-aminocyclopropane-1-carboxylate + H2O = 2-oxobutanoate + NH4(+). The protein is Putative 1-aminocyclopropane-1-carboxylate deaminase of Pyrococcus horikoshii (strain ATCC 700860 / DSM 12428 / JCM 9974 / NBRC 100139 / OT-3).